A 635-amino-acid chain; its full sequence is Protein OPG056 (635 aa).

The protein belongs to the orthopoxvirus OPG056 family. Interacts with protein OPG164. Interacts with protein OPG064.

It localises to the virion membrane. It is found in the host endosome. Functionally, plays a role in intracellular enveloped virus (IEV) transport to the cell surface through microtubule transport. Together with protein OPG064, forms a complex that interacts with host KLC2 (kinesin light chain isoform 2) to engage the kinesin-1 complex and thereby promote IEV trafficking. The polypeptide is Protein OPG056 (OPG056) (Homo sapiens (Human)).